Here is a 196-residue protein sequence, read N- to C-terminus: Putative NADH dehydrogenase/NAD(P)H nitroreductase Smal_0358 (196 aa).

This sequence belongs to the nitroreductase family. HadB/RutE subfamily. It depends on FMN as a cofactor.

In Stenotrophomonas maltophilia (strain R551-3), this protein is Putative NADH dehydrogenase/NAD(P)H nitroreductase Smal_0358.